Here is a 220-residue protein sequence, read N- to C-terminus: UPF0711 protein C18orf21 (220 aa).

Positions 117–181 (SRSFVSTLKS…VSTCSSKNTS (65 aa)) are disordered. Over residues 119–136 (SFVSTLKSNPATPTSKLS) the composition is skewed to polar residues. A Phosphoserine modification is found at S126. Phosphothreonine is present on residues T130 and T139. A compositionally biased stretch (low complexity) spans 171–180 (SVSTCSSKNT).

This sequence belongs to the UPF0711 family.

This chain is UPF0711 protein C18orf21 (C18orf21), found in Homo sapiens (Human).